The following is a 284-amino-acid chain: 4-diphosphocytidyl-2-C-methyl-D-erythritol kinase (284 aa).

Residue Lys14 is part of the active site. 98–108 (PMGGGLGGGSS) lines the ATP pocket. Asp140 is a catalytic residue.

The protein belongs to the GHMP kinase family. IspE subfamily.

It catalyses the reaction 4-CDP-2-C-methyl-D-erythritol + ATP = 4-CDP-2-C-methyl-D-erythritol 2-phosphate + ADP + H(+). It functions in the pathway isoprenoid biosynthesis; isopentenyl diphosphate biosynthesis via DXP pathway; isopentenyl diphosphate from 1-deoxy-D-xylulose 5-phosphate: step 3/6. Its function is as follows. Catalyzes the phosphorylation of the position 2 hydroxy group of 4-diphosphocytidyl-2C-methyl-D-erythritol. This chain is 4-diphosphocytidyl-2-C-methyl-D-erythritol kinase, found in Shewanella denitrificans (strain OS217 / ATCC BAA-1090 / DSM 15013).